The chain runs to 518 residues: Circadian clock oscillator protein KaiC (518 aa).

The KaiC 1 domain maps to 1–247 (MTNLPEHQSS…FTINNGINIF (247 aa)). Residues serine 49, glycine 50, threonine 51, glycine 52, lysine 53, threonine 54, and leucine 55 each coordinate ATP. Position 54 (threonine 54) interacts with Mg(2+). Glutamate 78 serves as the catalytic Proton acceptor in CI (KaiC 1). Residue serine 90 coordinates ATP. The segment at 116-123 (QEVAGDFD) is B-loop, required to bind KaiB and SasA. Positions 225, 226, 227, 229, and 231 each coordinate ATP. The linker stretch occupies residues 248–260 (PLGAMRLTQRSSN). Residues 261–518 (VRVSSGVKTL…AKGMQDLESE (258 aa)) form the KaiC 2 domain. ATP contacts are provided by threonine 290, glycine 291, threonine 292, glycine 293, lysine 294, threonine 295, and leucine 296. Threonine 295 is a binding site for Mg(2+). Glutamate 318 contacts Mg(2+). Glutamate 318 (proton acceptor in CII (KaiC 2)) is an active-site residue. Residue tryptophan 331 coordinates ATP. Serine 431 is modified (phosphoserine; by autocatalysis). Threonine 432 carries the phosphothreonine; by autocatalysis modification. The ATP site is built by arginine 451, lysine 457, methionine 458, arginine 459, serine 461, histidine 463, and lysine 465. The A-loop, interacts with KaiA stretch occupies residues 488–497 (GIISGTPTRI).

This sequence belongs to the KaiC family. As to quaternary structure, homohexamer resembling 2 stacked donuts rings with a central pore nearly blocked on one side; hexamerization is dependent on ATP-binding. Binds 2 ATP per monomer, at the subunit interface on each ring. The KaiABC complex composition changes during the circadian cycle to control KaiC phosphorylation. Complexes KaiC(6), KaiA(2-4):KaiC(6), KaiB(6):KaiC(6) and KaiC(6):KaiB(6):KaiA(12) are among the most important forms, many form cooperatively. Interacts with SasA, probably as 1 SasA trimer:1 KaiC homohexamer, has highest affinity for unphosphorylated SasA. The CI domain binds to KaiB and SasA; as they have a similar fold they compete for the same site on CI. KaiB assumes a thioredoxin-like form called KaiB(fs) when bound to KaiC. It depends on Mg(2+) as a cofactor. In terms of processing, phosphorylated on serine/threonine residues by autocatalysis. Both phosphorylated and unphosphorylated forms exist. Both autophosphorylates and autodephosphorylates. Phosphorylated form correlates with clock speed. Post-translationally, phosphorylated on serine and threonine residues by autocatalysis. Has a 4 step phosphorylation cycle; the autokinase acts first on Thr-432, then Ser-431. When Ser-431 is modified KaiC switches to an autophosphatase mode, acting first on phospho-Thr-432 then phospho-Ser-431.

The enzyme catalyses L-seryl-[protein] + ATP = O-phospho-L-seryl-[protein] + ADP + H(+). It carries out the reaction L-threonyl-[protein] + ATP = O-phospho-L-threonyl-[protein] + ADP + H(+). It catalyses the reaction ATP + H2O = ADP + phosphate + H(+). Its activity is regulated as follows. The interaction with KaiA enhances its phosphorylation status, while the interaction with KaiB decreases it. Its function is as follows. Central component of the KaiABC oscillator complex, which constitutes the main circadian regulator in cyanobacteria. Complex composition changes during the circadian cycle to control KaiC phosphorylation. KaiA stimulates KaiC autophosphorylation, while KaiB sequesters KaiA, leading to KaiC autodephosphorylation. Clock output pathways impact the RpaA transcriptional regulator. KaiC enhances the autophosphorylation activity of SasA, which then transfers its phosphate group to RpaA to activate it. KaiB and KaiC together enhance the phospho-RpaA dephosphatase activity of CikA. Stimulates SasA autophosphorylation. Fully phosphorylated KaiC (tested with phosphomimetic Asp-431-432-Asp) is the best stimulant, requires the ATPase activity of the CII domain. Unphosphorylated SasA associates with KaiC and its autophosphorylation activity is enhanced. Phospho-SasA is released and associates with RpaA, transferring its phosphate group. Formation of the KaiA:KaiB complex is promoted by KaiC, helping switch KaiC from its autophosphorylation to autodephosphatase function. Functionally, has a weak, temperature-independent ATPase activity (about 14 molecules of ATP per day) that defines the circadian period. ATPase activity is mostly contributed by the CI domain; the CII domain augments the activity. The addition of KaiA increases activity. ATPase is inhibited during the KaiC phosphorylating phase and activated during the KaiC dephosphorylating phase. The protein is Circadian clock oscillator protein KaiC of Thermosynechococcus vestitus (strain NIES-2133 / IAM M-273 / BP-1).